A 166-amino-acid chain; its full sequence is Monothiol glutaredoxin-3 (166 aa).

Positions 56 to 159 constitute a Glutaredoxin domain; sequence DSTDFEVFLE…STLDEWTHNK (104 aa). Cys76 serves as a coordination point for [2Fe-2S] cluster.

It belongs to the glutaredoxin family. Monothiol subfamily. In terms of assembly, homodimer.

Its subcellular location is the nucleus. In terms of biological role, monothiol glutaredoxin involved in the biogenesis of iron-sulfur clusters. Binds one iron-sulfur cluster per dimer. The iron-sulfur cluster is bound between subunits, and is complexed by a bound glutathione and a cysteine residue from each subunit. The sequence is that of Monothiol glutaredoxin-3 (grx3) from Schizosaccharomyces pombe (strain 972 / ATCC 24843) (Fission yeast).